Here is a 51-residue protein sequence, read N- to C-terminus: Perinerin (51 aa).

Functionally, antibacterial activity against both Gram-negative and Gram-positive bacteria. Shows marked activity against P.aeruginosa, B.megaterium, A.viridans, moderate activity against E.coli K-12, S.aureus and M.luteus, and minor activity against P.vulgaris. Antifungal activity against P.heliothis. This Perinereis aibuhitensis (Korean lugworm) protein is Perinerin.